The primary structure comprises 1409 residues: DNA-directed RNA polymerase subunit beta' (1409 aa).

4 residues coordinate Zn(2+): Cys-70, Cys-72, Cys-85, and Cys-88. Asp-461, Asp-463, and Asp-465 together coordinate Mg(2+). Zn(2+) contacts are provided by Cys-833, Cys-907, Cys-914, and Cys-917. The segment at Glu-1389 to Ala-1409 is disordered.

The protein belongs to the RNA polymerase beta' chain family. The RNAP catalytic core consists of 2 alpha, 1 beta, 1 beta' and 1 omega subunit. When a sigma factor is associated with the core the holoenzyme is formed, which can initiate transcription. Requires Mg(2+) as cofactor. Zn(2+) serves as cofactor.

It catalyses the reaction RNA(n) + a ribonucleoside 5'-triphosphate = RNA(n+1) + diphosphate. DNA-dependent RNA polymerase catalyzes the transcription of DNA into RNA using the four ribonucleoside triphosphates as substrates. This chain is DNA-directed RNA polymerase subunit beta', found in Pelobacter propionicus (strain DSM 2379 / NBRC 103807 / OttBd1).